The chain runs to 55 residues: Large ribosomal subunit protein bL33B (55 aa).

Belongs to the bacterial ribosomal protein bL33 family.

The protein is Large ribosomal subunit protein bL33B of Kineococcus radiotolerans (strain ATCC BAA-149 / DSM 14245 / SRS30216).